The following is a 498-amino-acid chain: MRINPTTSGSGVSTLEKKNPGRVVQIIGPVLDVAFPPGKMPNIYNALVVQGRDSVGQPINVACEVQQLLGNNRVRAVAMSATEGLTRGMAVIDTGAPISVPVGGATLGRIFNVLGEPVDNLGPVDTSTTSPIHRSAPAFIQLDTKLSIFETGIKVVDLLAPYRRGGKIGLFGGAGVGKTVLIMELINNIAKAHGGVSVFGGVGERTREGNDLYMEMKESGVINKENIAESKVALVYGQMNEPPGARMRVGLTALTMAEYFRDVNEQDVLLFIDNIFRFVQAGSEVSALLGRMPSAVGYQPTLSTEMGSLQERITSTKEGSITSIQAVYVPADDLTDPAPATTFAHLDATTVLSRGLAAKGIYPAVDPLDSTSTMLQPRIVGEEHYETAQRVKQTLQRYKELQDIIAILGLDELSEEDRLLVARARKIERFLSQPFFVAEVFTGSPGKYVGLAETIRGFQLILSGELDGLPEQAFYLVGTIDEATAKAMNLEMESNLKK.

172 to 179 contacts ATP; sequence GGAGVGKT.

This sequence belongs to the ATPase alpha/beta chains family. As to quaternary structure, F-type ATPases have 2 components, CF(1) - the catalytic core - and CF(0) - the membrane proton channel. CF(1) has five subunits: alpha(3), beta(3), gamma(1), delta(1), epsilon(1). CF(0) has four main subunits: a(1), b(1), b'(1) and c(9-12).

The protein resides in the plastid. Its subcellular location is the chloroplast thylakoid membrane. The catalysed reaction is ATP + H2O + 4 H(+)(in) = ADP + phosphate + 5 H(+)(out). Produces ATP from ADP in the presence of a proton gradient across the membrane. The catalytic sites are hosted primarily by the beta subunits. In Solanum lycopersicum (Tomato), this protein is ATP synthase subunit beta, chloroplastic.